We begin with the raw amino-acid sequence, 128 residues long: Small ribosomal subunit protein uS9c (128 aa).

The tract at residues Ser-106 to Arg-128 is disordered. Residues Lys-109–Arg-128 are compositionally biased toward basic residues.

The protein belongs to the universal ribosomal protein uS9 family.

The protein resides in the plastid. The protein localises to the chloroplast. This chain is Small ribosomal subunit protein uS9c (rps9), found in Cyanidium caldarium (Red alga).